Here is an 802-residue protein sequence, read N- to C-terminus: Bifunctional purine biosynthetic protein ADE5,7 (802 aa).

The GARS stretch occupies residues 1 to 450 (MLNILVLGNG…QNSESSKVAI (450 aa)). Residues 114–330 (KRFMSKHNIP…LAQVFLAAAE (217 aa)) form the ATP-grasp domain. 141-203 (QAHTDKAFVI…EQFLEGDEIS (63 aa)) contacts ATP. Mg(2+) contacts are provided by Glu-298 and Asn-300. The interval 451–802 (TYADSGVSVD…CVIENGTKLY (352 aa)) is AIRS. A phosphoserine mark is found at Ser-455 and Ser-458.

In the N-terminal section; belongs to the GARS family. It in the C-terminal section; belongs to the AIR synthase family. It depends on Mg(2+) as a cofactor. Mn(2+) serves as cofactor.

It localises to the cytoplasm. The catalysed reaction is 5-phospho-beta-D-ribosylamine + glycine + ATP = N(1)-(5-phospho-beta-D-ribosyl)glycinamide + ADP + phosphate + H(+). It catalyses the reaction 2-formamido-N(1)-(5-O-phospho-beta-D-ribosyl)acetamidine + ATP = 5-amino-1-(5-phospho-beta-D-ribosyl)imidazole + ADP + phosphate + H(+). It functions in the pathway purine metabolism; IMP biosynthesis via de novo pathway; 5-amino-1-(5-phospho-D-ribosyl)imidazole from N(2)-formyl-N(1)-(5-phospho-D-ribosyl)glycinamide: step 2/2. The protein operates within purine metabolism; IMP biosynthesis via de novo pathway; N(1)-(5-phospho-D-ribosyl)glycinamide from 5-phospho-alpha-D-ribose 1-diphosphate: step 2/2. Functionally, catalyzes the second and fifth step in the 'de novo' purine biosynthesis pathway; contains phosphoribosylamine--glycine ligase (GARS) and phosphoribosylformylglycinamidine cyclo-ligase (AIRS) activities. This chain is Bifunctional purine biosynthetic protein ADE5,7, found in Saccharomyces cerevisiae (strain ATCC 204508 / S288c) (Baker's yeast).